Consider the following 75-residue polypeptide: Protein B7 (75 aa).

This Human herpesvirus 6B (strain Z29) (HHV-6 variant B) protein is Protein B7 (B7).